Here is a 151-residue protein sequence, read N- to C-terminus: Ribosome maturation factor RimP (151 aa).

The protein belongs to the RimP family.

It is found in the cytoplasm. Functionally, required for maturation of 30S ribosomal subunits. The sequence is that of Ribosome maturation factor RimP from Aliivibrio fischeri (strain ATCC 700601 / ES114) (Vibrio fischeri).